Reading from the N-terminus, the 342-residue chain is MAPQAYPTAGQTTTVCVTGAAGFMASWLVKRLLEKGYIVHATVRDPENKAKVSHLLNLPGATDRLKLFRAELCEDGSFDAAVAGCNGVFHVATPTEFMPKDPENDLIKPAIEGTLNVLKSCTKVDSIKRVVVTSSAATVSINNSSEQNQYIDESCWTDVNFLTSQKPPGWAYPVSKTLAEQAALKYAEEHSLDVVTVIPVLVVGPAVTPTVPSSVELALSLITGDEFKMGALKGMQFVSGSISLVHIDDVCSAQIFLMEKPSAQGRYICFPVNTGIPQLAEFLSKRYPQYKVPTKFDDVPATPKLTISSQKLLDCGFSFKYGIEDIYDQAIEYMKTKGLLTC.

NADP(+) is bound by residues Arg-44, Lys-51, 71–72 (EL), 91–93 (VAT), Tyr-172, Lys-176, 199–202 (PVLV), and Ser-214. The active-site Proton donor is the Lys-176.

It belongs to the NAD(P)-dependent epimerase/dehydratase family. Dihydroflavonol-4-reductase subfamily. Highly expressed in leaves and weakly in stems. Not expressed in roots.

It functions in the pathway secondary metabolite biosynthesis; flavonoid biosynthesis. This Ginkgo biloba (Ginkgo) protein is Putative anthocyanidin reductase.